The sequence spans 71 residues: Conotoxin Ca5.1 (71 aa).

The N-terminal stretch at 1-19 (MRCVPVFIILLLLASPAAS) is a signal peptide. The propeptide occupies 20-56 (DPLEKRIQSDLIRAALEDADTKNDPRILEDIVSTALA).

It belongs to the conotoxin T superfamily. In terms of processing, contains 2 disulfide bonds that can be either 'C1-C3, C2-C4' or 'C1-C4, C2-C3', since these disulfide connectivities have been observed for conotoxins with cysteine framework V (for examples, see AC P0DQQ7 and AC P81755). In terms of tissue distribution, expressed by the venom duct.

It localises to the secreted. This chain is Conotoxin Ca5.1, found in Conus caracteristicus (Characteristic cone).